The sequence spans 137 residues: Actin-depolymerizing factor 2 (137 aa).

One can recognise an ADF-H domain in the interval 5-137 (ASGMAVHDDC…GLDVFKSRTN (133 aa)). A Phosphoserine modification is found at S6.

It belongs to the actin-binding proteins ADF family. In terms of assembly, interacts with AIP1-1.

The protein localises to the cytoplasm. The protein resides in the cytoskeleton. In terms of biological role, actin-depolymerizing protein. Severs actin filaments (F-actin) and binds to actin monomers. Required for normal cell growth, plant development, cell organ expansion and flowering. Essential for root-knot nematode infection. The protein is Actin-depolymerizing factor 2 (ADF2) of Arabidopsis thaliana (Mouse-ear cress).